The primary structure comprises 476 residues: 3-isopropylmalate dehydratase large subunit (476 aa).

Positions 347, 407, and 410 each coordinate [4Fe-4S] cluster. The interval 418 to 442 (LAPGERSASTSNRNFEGRQGKGGRT) is disordered.

This sequence belongs to the aconitase/IPM isomerase family. LeuC type 1 subfamily. As to quaternary structure, heterodimer of LeuC and LeuD. The cofactor is [4Fe-4S] cluster.

It catalyses the reaction (2R,3S)-3-isopropylmalate = (2S)-2-isopropylmalate. It functions in the pathway amino-acid biosynthesis; L-leucine biosynthesis; L-leucine from 3-methyl-2-oxobutanoate: step 2/4. Its function is as follows. Catalyzes the isomerization between 2-isopropylmalate and 3-isopropylmalate, via the formation of 2-isopropylmaleate. The polypeptide is 3-isopropylmalate dehydratase large subunit (Streptomyces coelicolor (strain ATCC BAA-471 / A3(2) / M145)).